A 291-amino-acid chain; its full sequence is Protease HtpX homolog (291 aa).

Transmembrane regions (helical) follow at residues 4-24 (IALF…VASL) and 38-58 (LGAL…ISLL). Position 144 (His-144) interacts with Zn(2+). Residue Glu-145 is part of the active site. His-148 is a Zn(2+) binding site. The next 2 membrane-spanning stretches (helical) occupy residues 159–179 (LIQG…GYAV) and 199–219 (VTTI…VAWF). Glu-224 contributes to the Zn(2+) binding site.

Belongs to the peptidase M48B family. Requires Zn(2+) as cofactor.

It localises to the cell inner membrane. The protein is Protease HtpX homolog of Paracidovorax citrulli (strain AAC00-1) (Acidovorax citrulli).